The following is a 413-amino-acid chain: Clusterin-associated protein 1 (413 aa).

Positions 198 to 291 form a coiled coil; sequence KTKDLLNNVA…ERFEEAKNTL (94 aa). Residues 305–413 form a disordered region; it reads LLKSGSNDDS…EPLDESDNDF (109 aa). Acidic residues-rich tracts occupy residues 312-328 and 360-388; these read DDSD…DSEL and DSDD…EDES. S314, S324, and S326 each carry phosphoserine. A Phosphoserine modification is found at S409.

This sequence belongs to the CLUAP1 family. Interacts with CLU/clusterin. Interacts with UBXN10; the interaction is direct. Expressed in testis, thyroid and trachea and to a lower extent in spinal cord and adrenal gland. Highly expressed in colon cancer and osteosarcoma cell lines.

The protein resides in the cell projection. It is found in the cilium. It localises to the nucleus. In terms of biological role, required for cilia biogenesis. Appears to function within the multiple intraflagellar transport complex B (IFT-B). Key regulator of hedgehog signaling. The polypeptide is Clusterin-associated protein 1 (CLUAP1) (Homo sapiens (Human)).